A 136-amino-acid chain; its full sequence is Large ribosomal subunit protein uL16 (136 aa).

The protein belongs to the universal ribosomal protein uL16 family. In terms of assembly, part of the 50S ribosomal subunit.

Binds 23S rRNA and is also seen to make contacts with the A and possibly P site tRNAs. The protein is Large ribosomal subunit protein uL16 of Photobacterium profundum (strain SS9).